The primary structure comprises 172 residues: uncharacterized protein (172 aa).

The signal sequence occupies residues 1 to 21; it reads MMKFKKCLLPVAMLASFTLAG. Cys-22 is lipidated: N-palmitoyl cysteine. The S-diacylglycerol cysteine moiety is linked to residue Cys-22.

The protein resides in the cell membrane. This is an uncharacterized protein from Escherichia coli O157:H7.